Here is a 410-residue protein sequence, read N- to C-terminus: Trans-splicing factor Raa2, chloroplastic (410 aa).

Disordered regions lie at residues 1-40 and 56-106; these read MRTRAGAFFGKQRSTSPSGSSTSASRQWLRSSPGRTQRPA and AADH…QQQV. Residues 1–46 constitute a chloroplast transit peptide; that stretch reads MRTRAGAFFGKQRSTSPSGSSTSASRQWLRSSPGRTQRPAAHRVLA. The span at 14-25 shows a compositional bias: low complexity; that stretch reads STSPSGSSTSAS. The segment covering 26–35 has biased composition (polar residues); that stretch reads RQWLRSSPGR. The span at 96-106 shows a compositional bias: low complexity; the sequence is RQAQRRQQQQV.

Belongs to the pseudouridine synthase TruB family. In terms of assembly, possibly associated with other factors required for trans-splicing.

The protein localises to the plastid. The protein resides in the chloroplast. Functionally, required for trans-splicing of exons 2 and 3 of the chloroplast encoded psaA mRNA (a group II intron). It is not known if this protein has pseudouridine activity; mutation of the potential active site residue does not cause loss of trans-splicing. The protein is Trans-splicing factor Raa2, chloroplastic (RAA2) of Chlamydomonas reinhardtii (Chlamydomonas smithii).